Reading from the N-terminus, the 66-residue chain is Large ribosomal subunit protein bL35 (66 aa).

A compositionally biased stretch (basic residues) spans 1–24 (MPKQKTHRGAAKRFKKTGSGKLKR). The segment at 1-26 (MPKQKTHRGAAKRFKKTGSGKLKRDH) is disordered.

This sequence belongs to the bacterial ribosomal protein bL35 family.

This chain is Large ribosomal subunit protein bL35, found in Bacillus cytotoxicus (strain DSM 22905 / CIP 110041 / 391-98 / NVH 391-98).